A 968-amino-acid chain; its full sequence is Dynein axonemal intermediate chain 3 (968 aa).

Residues 1-33 show a composition bias toward basic and acidic residues; it reads MKDTSSKRPKSKEANKKKTKDKSNADNLPKPEE. 2 disordered regions span residues 1–39 and 136–166; these read MKDT…ASEP and KPPA…PEPQ. Acidic residues predominate over residues 141–157; that stretch reads GADEQMEDEEQQEEEEE. 3 WD repeats span residues 407 to 447, 480 to 536, and 712 to 753; these read ECPD…DRLQ, GHKA…VMVH, and VYSK…RQPS. Residues 830-857 adopt a coiled-coil conformation; the sequence is LHTHTDQLRVLEERVREAKQNLLAVSDR. Residues 897 to 919 show a composition bias toward basic and acidic residues; it reads KRQSDHQKKKKETEAEQQKKKTE. Positions 897–930 are disordered; it reads KRQSDHQKKKKETEAEQQKKKTELVTPPKQEEEV.

In terms of assembly, part of the multisubunit axonemal dynein complex formed at least of two heavy chains and a number of intermediate and light chains.

The protein resides in the cytoplasm. Functionally, may be involved in the regulation of cilia function. The protein is Dynein axonemal intermediate chain 3 (dnai3) of Danio rerio (Zebrafish).